The sequence spans 377 residues: MNIFTTFLFMIVIGAVIGAATNHLAIKMLFRPYKPYYLFGKQLPFTPGLIPKRRDEVAKQVGVLVMEHLLTPEGIQKRFESSEAKQEILHTVHRLIDKGADMEITVLSLLERFGVSHADVKADEWLHHWSDRKLASLLKKYNEQTLSELLPLEVENKISSKIPDAADYILKRGIHYFESEEGKARLGNMIDDFLKERGMLGGMVQMFLGNSSLIDRVHPEIIKFLRNAETKKFLTDLLVQEWEKVKQFSLQELDDKWNVKELAYSVKKQLLSHFSTKVILDKPVGSYVSEVAVDLKIYLAPVLVDKGIKAASNALEGLLAKLKFEDIIREQIELFPLKKMEELVISISNNELKMITFLGGFLGGLIGAIQAIFVTLF.

The next 2 membrane-spanning stretches (helical) occupy residues 1 to 21 and 357 to 377; these read MNIF…GAAT and FLGG…VTLF.

It belongs to the UPF0754 family.

The protein resides in the cell membrane. This is UPF0754 membrane protein BPUM_0927 from Bacillus pumilus (strain SAFR-032).